Here is a 131-residue protein sequence, read N- to C-terminus: Small ribosomal subunit protein uS8 (131 aa).

It belongs to the universal ribosomal protein uS8 family. Part of the 30S ribosomal subunit. Contacts proteins S5 and S12.

Functionally, one of the primary rRNA binding proteins, it binds directly to 16S rRNA central domain where it helps coordinate assembly of the platform of the 30S subunit. The sequence is that of Small ribosomal subunit protein uS8 from Campylobacter hominis (strain ATCC BAA-381 / DSM 21671 / CCUG 45161 / LMG 19568 / NCTC 13146 / CH001A).